We begin with the raw amino-acid sequence, 357 residues long: Multiple sugar-binding periplasmic protein SbpA (357 aa).

The N-terminal stretch at 1 to 20 is a signal peptide; sequence MSSSFTTTLAGMAVGMLVLA.

Belongs to the bacterial solute-binding protein 2 family.

It localises to the periplasm. Functionally, mediates chemotaxis towards D-galactose, L-arabinose and D-fucose but not towards D-fructose. Probably part of a binding-protein high affinity uptake system. This is Multiple sugar-binding periplasmic protein SbpA (sbpA) from Azospirillum brasilense.